We begin with the raw amino-acid sequence, 621 residues long: MSAVSISAVKSDFFTVEAIAVTHHRTPHPPHFPSLRFPLSLKSPPATSLNLVAGSKLLHFSRRLPSIKCSYTPSLDLSEEQFTKFKKASEKGNLVPLFRCVFSDHLTPILAYRCLVKEDDRDAPSFLFESVEPGSQSSNIGRYSVVGAQPTIEIVAKGNVVTVMDHGASLRTEEEVDDPMMVPQKIMEEWNPQGIDELPEAFCGGWVGYFSYDTVRYVEKKKLPFSNAPEDDRSLPDVNLGLYDDVIVFDHVEKKAYVIHWVRIDKDRSVEENFREGMNRLESLTSRIQDQKPPKMPTGFIKLRTQLFGPKLEKSTMTSEAYKEAVVEAKEHILAGDIFQIVLSQRFERRTFADPFEIYRALRIVNPSPYMAYLQVRGCILVASSPEILLRSKNRKITNRPLAGTVRRGKTPKEDLMLEKELLSDEKQCAEHIMLVDLGRNDVGKVSKPGSVEVKKLKDIEWFSHVMHISSTVVGELLDHLTSWDALRAVLPVGTVSGAPKVKAMELIDELEVTRRGPYSGGFGGISFNGDMDIALALRTMVFPTNTRYDTLYSYKHPQRRREWIAHIQAGAGIVADSNPDDEHRECENKAAALARAIDLAESSFLEAPEFTTITPHINNI.

Residues 1-87 (MSAVSISAVK…SEEQFTKFKK (87 aa)) constitute a chloroplast transit peptide.

The protein belongs to the anthranilate synthase component I family. In terms of assembly, heterotetramer consisting of two non-identical subunits: a beta subunit and a large alpha subunit.

Its subcellular location is the plastid. It is found in the chloroplast. It catalyses the reaction chorismate + L-glutamine = anthranilate + pyruvate + L-glutamate + H(+). Its pathway is amino-acid biosynthesis; L-tryptophan biosynthesis; L-tryptophan from chorismate: step 1/5. Feedback inhibition by tryptophan. Part of a heterotetrameric complex that catalyzes the two-step biosynthesis of anthranilate, an intermediate in the biosynthesis of L-tryptophan. In the first step, the glutamine-binding beta subunit of anthranilate synthase (AS) provides the glutamine amidotransferase activity which generates ammonia as a substrate that, along with chorismate, is used in the second step, catalyzed by the large alpha subunit of AS to produce anthranilate. This Arabidopsis thaliana (Mouse-ear cress) protein is Anthranilate synthase alpha subunit 2, chloroplastic (ASA2).